Reading from the N-terminus, the 109-residue chain is MGKRPNFGGMGMGNMQGLIKQAKKMQQQMEAEQANLATQEFVGKAADDMVVATFSGDRKLKDLKINKEAIDPDDPDMLQDLVIDAVNKGIKAVDDATQASMGKYTKGLM.

This sequence belongs to the YbaB/EbfC family. As to quaternary structure, homodimer.

The protein localises to the cytoplasm. It is found in the nucleoid. Functionally, binds to DNA and alters its conformation. May be involved in regulation of gene expression, nucleoid organization and DNA protection. The protein is Nucleoid-associated protein LJ_0424 of Lactobacillus johnsonii (strain CNCM I-12250 / La1 / NCC 533).